The sequence spans 235 residues: Large ribosomal subunit protein uL1 (235 aa).

Belongs to the universal ribosomal protein uL1 family. As to quaternary structure, part of the 50S ribosomal subunit.

Its function is as follows. Binds directly to 23S rRNA. The L1 stalk is quite mobile in the ribosome, and is involved in E site tRNA release. Functionally, protein L1 is also a translational repressor protein, it controls the translation of the L11 operon by binding to its mRNA. The protein is Large ribosomal subunit protein uL1 of Prochlorococcus marinus (strain NATL1A).